The following is a 129-amino-acid chain: Cytochrome c oxidase subunit 5B, mitochondrial (129 aa).

A mitochondrion-targeting transit peptide spans 1–31 (MASRLLRGVGALAAQALRAHGPRGVAATRSM). 2 positions are modified to N6-acetyllysine: K68 and K86. The Zn(2+) site is built by C91, C93, C113, and C116. An N6-acetyllysine modification is found at K121.

It belongs to the cytochrome c oxidase subunit 5B family. As to quaternary structure, component of the cytochrome c oxidase (complex IV, CIV), a multisubunit enzyme composed of 14 subunits. The complex is composed of a catalytic core of 3 subunits MT-CO1, MT-CO2 and MT-CO3, encoded in the mitochondrial DNA, and 11 supernumerary subunits COX4I, COX5A, COX5B, COX6A, COX6B, COX6C, COX7A, COX7B, COX7C, COX8 and NDUFA4, which are encoded in the nuclear genome. The complex exists as a monomer or a dimer and forms supercomplexes (SCs) in the inner mitochondrial membrane with NADH-ubiquinone oxidoreductase (complex I, CI) and ubiquinol-cytochrome c oxidoreductase (cytochrome b-c1 complex, complex III, CIII), resulting in different assemblies (supercomplex SCI(1)III(2)IV(1) and megacomplex MCI(2)III(2)IV(2)).

The protein localises to the mitochondrion inner membrane. Its pathway is energy metabolism; oxidative phosphorylation. Functionally, component of the cytochrome c oxidase, the last enzyme in the mitochondrial electron transport chain which drives oxidative phosphorylation. The respiratory chain contains 3 multisubunit complexes succinate dehydrogenase (complex II, CII), ubiquinol-cytochrome c oxidoreductase (cytochrome b-c1 complex, complex III, CIII) and cytochrome c oxidase (complex IV, CIV), that cooperate to transfer electrons derived from NADH and succinate to molecular oxygen, creating an electrochemical gradient over the inner membrane that drives transmembrane transport and the ATP synthase. Cytochrome c oxidase is the component of the respiratory chain that catalyzes the reduction of oxygen to water. Electrons originating from reduced cytochrome c in the intermembrane space (IMS) are transferred via the dinuclear copper A center (CU(A)) of subunit 2 and heme A of subunit 1 to the active site in subunit 1, a binuclear center (BNC) formed by heme A3 and copper B (CU(B)). The BNC reduces molecular oxygen to 2 water molecules using 4 electrons from cytochrome c in the IMS and 4 protons from the mitochondrial matrix. The protein is Cytochrome c oxidase subunit 5B, mitochondrial (Cox5b) of Rattus norvegicus (Rat).